We begin with the raw amino-acid sequence, 220 residues long: Probable septum site-determining protein MinC (220 aa).

Belongs to the MinC family. As to quaternary structure, interacts with MinD and FtsZ.

Its function is as follows. Cell division inhibitor that blocks the formation of polar Z ring septums. Rapidly oscillates between the poles of the cell to destabilize FtsZ filaments that have formed before they mature into polar Z rings. Prevents FtsZ polymerization. The chain is Probable septum site-determining protein MinC from Prochlorococcus marinus subsp. pastoris (strain CCMP1986 / NIES-2087 / MED4).